The sequence spans 745 residues: Inhibitor of nuclear factor kappa-B kinase subunit alpha (745 aa).

One can recognise a Protein kinase domain in the interval W15–V302. Residues L21–V29 and K44 each bind ATP. At T23 the chain carries Phosphothreonine; by PKB/AKT1 and SGK1. D144 acts as the Proton acceptor in catalysis. S176 bears the Phosphoserine; by MAP3K14 mark. T179 carries the (Microbial infection) O-acetylthreonine; by Yersinia YopJ modification. At S180 the chain carries Phosphoserine; by SGK1. The interval L455–L476 is leucine-zipper. Positions L738 to L743 are NEMO-binding.

This sequence belongs to the protein kinase superfamily. Ser/Thr protein kinase family. I-kappa-B kinase subfamily. In terms of assembly, component of the I-kappa-B-kinase (IKK) core complex consisting of CHUK, IKBKB and IKBKG; probably four alpha/CHUK-beta/IKBKB dimers are associated with four gamma/IKBKG subunits. The IKK core complex seems to associate with regulatory or adapter proteins to form a IKK-signalosome holo-complex. The IKK complex associates with TERF2IP/RAP1, leading to promote IKK-mediated phosphorylation of RELA/p65. Part of a complex composed of NCOA2, NCOA3, CHUK/IKKA, IKBKB, IKBKG and CREBBP. Part of a 70-90 kDa complex at least consisting of CHUK/IKKA, IKBKB, NFKBIA, RELA, ELP1 and MAP3K14. Directly interacts with TRPC4AP. May interact with TRAF2. Interacts with NALP2. May interact with MAVS/IPS1. Interacts with ARRB1 and ARRB2. Interacts with NLRC5; prevents CHUK phosphorylation and kinase activity. Interacts with PIAS1; this interaction induces PIAS1 phosphorylation. Interacts with ZNF268 isoform 2; the interaction is further increased in a TNF-alpha-dependent manner. Interacts with FOXO3. Interacts with IFIT5; the interaction synergizes the recruitment of IKK to MAP3K7 and enhances IKK phosphorylation. Interacts with LRRC14. Interacts with SASH1. Directly interacts with DDX3X after the physiological activation of the TLR7 and TLR8 pathways; this interaction enhances CHUK autophosphorylation. (Microbial infection) Interacts with InlC of Listeria monocytogenes. Phosphorylated by MAP3K14/NIK, AKT and to a lesser extent by MEKK1, and dephosphorylated by PP2A. Autophosphorylated. In terms of processing, ubiquitinated by TRIM56 via 'Lys-63'-linked ubiquitination, promoting activation of CHUK/IKKA. Post-translationally, (Microbial infection) Acetylation of Thr-179 by Yersinia YopJ prevents phosphorylation and activation, thus blocking the I-kappa-B signaling pathway. Widely expressed.

The protein resides in the cytoplasm. The protein localises to the nucleus. It carries out the reaction L-seryl-[I-kappa-B protein] + ATP = O-phospho-L-seryl-[I-kappa-B protein] + ADP + H(+). Activated when phosphorylated and inactivated when dephosphorylated. Functionally, serine kinase that plays an essential role in the NF-kappa-B signaling pathway which is activated by multiple stimuli such as inflammatory cytokines, bacterial or viral products, DNA damages or other cellular stresses. Acts as a part of the canonical IKK complex in the conventional pathway of NF-kappa-B activation and phosphorylates inhibitors of NF-kappa-B on serine residues. These modifications allow polyubiquitination of the inhibitors and subsequent degradation by the proteasome. In turn, free NF-kappa-B is translocated into the nucleus and activates the transcription of hundreds of genes involved in immune response, growth control, or protection against apoptosis. Negatively regulates the pathway by phosphorylating the scaffold protein TAXBP1 and thus promoting the assembly of the A20/TNFAIP3 ubiquitin-editing complex (composed of A20/TNFAIP3, TAX1BP1, and the E3 ligases ITCH and RNF11). Therefore, CHUK plays a key role in the negative feedback of NF-kappa-B canonical signaling to limit inflammatory gene activation. As part of the non-canonical pathway of NF-kappa-B activation, the MAP3K14-activated CHUK/IKKA homodimer phosphorylates NFKB2/p100 associated with RelB, inducing its proteolytic processing to NFKB2/p52 and the formation of NF-kappa-B RelB-p52 complexes. In turn, these complexes regulate genes encoding molecules involved in B-cell survival and lymphoid organogenesis. Also participates in the negative feedback of the non-canonical NF-kappa-B signaling pathway by phosphorylating and destabilizing MAP3K14/NIK. Within the nucleus, phosphorylates CREBBP and consequently increases both its transcriptional and histone acetyltransferase activities. Modulates chromatin accessibility at NF-kappa-B-responsive promoters by phosphorylating histones H3 at 'Ser-10' that are subsequently acetylated at 'Lys-14' by CREBBP. Additionally, phosphorylates the CREBBP-interacting protein NCOA3. Also phosphorylates FOXO3 and may regulate this pro-apoptotic transcription factor. Phosphorylates RIPK1 at 'Ser-25' which represses its kinase activity and consequently prevents TNF-mediated RIPK1-dependent cell death. Phosphorylates AMBRA1 following mitophagy induction, promoting AMBRA1 interaction with ATG8 family proteins and its mitophagic activity. This chain is Inhibitor of nuclear factor kappa-B kinase subunit alpha (CHUK), found in Homo sapiens (Human).